The chain runs to 188 residues: Putative manganese efflux pump MntP (188 aa).

6 consecutive transmembrane segments (helical) span residues 3 to 23 (FYALLLIALGMSMDAFAVALA), 35 to 55 (IAATALVFGSVEALTPLAGWV), 63 to 83 (FISEWDHWAAFVLLGGLGLKM), 107 to 127 (VLTAFGTSIDSMIVGVGLAFM), 131 to 151 (IAFAAAIIGMATTVMVAVGLA), and 167 to 187 (AGGLVLIAIGTWTLLSHLGLI).

The protein belongs to the MntP (TC 9.B.29) family.

Its subcellular location is the cell inner membrane. Probably functions as a manganese efflux pump. This Neisseria meningitidis serogroup A / serotype 4A (strain DSM 15465 / Z2491) protein is Putative manganese efflux pump MntP.